The primary structure comprises 275 residues: 4-hydroxy-tetrahydrodipicolinate reductase (275 aa).

NAD(+) is bound by residues 13–18 and 108–110; these read GAAGKM and GTT. His-164 functions as the Proton donor/acceptor in the catalytic mechanism. Residue His-165 coordinates (S)-2,3,4,5-tetrahydrodipicolinate. Catalysis depends on Lys-168, which acts as the Proton donor. Position 174–175 (174–175) interacts with (S)-2,3,4,5-tetrahydrodipicolinate; the sequence is GT.

The protein belongs to the DapB family.

It is found in the cytoplasm. The enzyme catalyses (S)-2,3,4,5-tetrahydrodipicolinate + NAD(+) + H2O = (2S,4S)-4-hydroxy-2,3,4,5-tetrahydrodipicolinate + NADH + H(+). It catalyses the reaction (S)-2,3,4,5-tetrahydrodipicolinate + NADP(+) + H2O = (2S,4S)-4-hydroxy-2,3,4,5-tetrahydrodipicolinate + NADPH + H(+). It functions in the pathway amino-acid biosynthesis; L-lysine biosynthesis via DAP pathway; (S)-tetrahydrodipicolinate from L-aspartate: step 4/4. In terms of biological role, catalyzes the conversion of 4-hydroxy-tetrahydrodipicolinate (HTPA) to tetrahydrodipicolinate. The protein is 4-hydroxy-tetrahydrodipicolinate reductase of Acaryochloris marina (strain MBIC 11017).